The following is a 358-amino-acid chain: 3-isopropylmalate dehydrogenase (358 aa).

77–90 (GPKWTNLPPDQQPE) is a binding site for NAD(+). Substrate contacts are provided by Arg98, Arg108, Arg137, and Asp226. Residues Asp226, Asp250, and Asp254 each contribute to the Mg(2+) site. Position 284–296 (284–296 (GSAPDIAGKGIAN)) interacts with NAD(+).

This sequence belongs to the isocitrate and isopropylmalate dehydrogenases family. LeuB type 1 subfamily. Homodimer. Mg(2+) is required as a cofactor. The cofactor is Mn(2+).

The protein localises to the cytoplasm. It carries out the reaction (2R,3S)-3-isopropylmalate + NAD(+) = 4-methyl-2-oxopentanoate + CO2 + NADH. Its pathway is amino-acid biosynthesis; L-leucine biosynthesis; L-leucine from 3-methyl-2-oxobutanoate: step 3/4. In terms of biological role, catalyzes the oxidation of 3-carboxy-2-hydroxy-4-methylpentanoate (3-isopropylmalate) to 3-carboxy-4-methyl-2-oxopentanoate. The product decarboxylates to 4-methyl-2 oxopentanoate. This chain is 3-isopropylmalate dehydrogenase, found in Haemophilus influenzae (strain 86-028NP).